Reading from the N-terminus, the 419-residue chain is Diaminopimelate decarboxylase (419 aa).

K56 bears the N6-(pyridoxal phosphate)lysine mark. Pyridoxal 5'-phosphate is bound by residues G234 and 274–277 (EPGR). Substrate-binding residues include R277, R312, and Y316. Residue C343 is the Proton donor of the active site. Residues E344 and Y372 each contribute to the substrate site. Residue Y372 coordinates pyridoxal 5'-phosphate.

Belongs to the Orn/Lys/Arg decarboxylase class-II family. LysA subfamily. As to quaternary structure, homodimer. Pyridoxal 5'-phosphate is required as a cofactor.

The enzyme catalyses meso-2,6-diaminopimelate + H(+) = L-lysine + CO2. Its pathway is amino-acid biosynthesis; L-lysine biosynthesis via DAP pathway; L-lysine from DL-2,6-diaminopimelate: step 1/1. In terms of biological role, specifically catalyzes the decarboxylation of meso-diaminopimelate (meso-DAP) to L-lysine. The sequence is that of Diaminopimelate decarboxylase from Archaeoglobus fulgidus (strain ATCC 49558 / DSM 4304 / JCM 9628 / NBRC 100126 / VC-16).